Consider the following 573-residue polypeptide: Proline--tRNA ligase (573 aa).

The protein belongs to the class-II aminoacyl-tRNA synthetase family. ProS type 1 subfamily. As to quaternary structure, homodimer.

The protein localises to the cytoplasm. The catalysed reaction is tRNA(Pro) + L-proline + ATP = L-prolyl-tRNA(Pro) + AMP + diphosphate. Functionally, catalyzes the attachment of proline to tRNA(Pro) in a two-step reaction: proline is first activated by ATP to form Pro-AMP and then transferred to the acceptor end of tRNA(Pro). As ProRS can inadvertently accommodate and process non-cognate amino acids such as alanine and cysteine, to avoid such errors it has two additional distinct editing activities against alanine. One activity is designated as 'pretransfer' editing and involves the tRNA(Pro)-independent hydrolysis of activated Ala-AMP. The other activity is designated 'posttransfer' editing and involves deacylation of mischarged Ala-tRNA(Pro). The misacylated Cys-tRNA(Pro) is not edited by ProRS. This chain is Proline--tRNA ligase, found in Caldanaerobacter subterraneus subsp. tengcongensis (strain DSM 15242 / JCM 11007 / NBRC 100824 / MB4) (Thermoanaerobacter tengcongensis).